A 135-amino-acid polypeptide reads, in one-letter code: Large ribosomal subunit protein bL21 (135 aa).

A disordered region spans residues 114–135 (EAEKETPVLDETPAEEVETAAE). Residues 125 to 135 (TPAEEVETAAE) show a composition bias toward acidic residues.

This sequence belongs to the bacterial ribosomal protein bL21 family. Part of the 50S ribosomal subunit. Contacts protein L20.

Functionally, this protein binds to 23S rRNA in the presence of protein L20. The protein is Large ribosomal subunit protein bL21 of Nostoc punctiforme (strain ATCC 29133 / PCC 73102).